A 280-amino-acid chain; its full sequence is Thymidylate synthase (280 aa).

Residue Arg-21 coordinates dUMP. A (6R)-5,10-methylene-5,6,7,8-tetrahydrofolate-binding site is contributed by His-51. 142-143 (RR) is a binding site for dUMP. Residue Cys-162 is the Nucleophile of the active site. Residues 182–185 (RSAD), Asn-193, and 223–225 (HLY) contribute to the dUMP site. A (6R)-5,10-methylene-5,6,7,8-tetrahydrofolate-binding site is contributed by Asp-185. (6R)-5,10-methylene-5,6,7,8-tetrahydrofolate is bound at residue Ala-279.

It belongs to the thymidylate synthase family. Bacterial-type ThyA subfamily. Homodimer.

It is found in the cytoplasm. It carries out the reaction dUMP + (6R)-5,10-methylene-5,6,7,8-tetrahydrofolate = 7,8-dihydrofolate + dTMP. Its pathway is pyrimidine metabolism; dTTP biosynthesis. In terms of biological role, catalyzes the reductive methylation of 2'-deoxyuridine-5'-monophosphate (dUMP) to 2'-deoxythymidine-5'-monophosphate (dTMP) while utilizing 5,10-methylenetetrahydrofolate (mTHF) as the methyl donor and reductant in the reaction, yielding dihydrofolate (DHF) as a by-product. This enzymatic reaction provides an intracellular de novo source of dTMP, an essential precursor for DNA biosynthesis. The chain is Thymidylate synthase from Acinetobacter baumannii (strain AB307-0294).